The primary structure comprises 417 residues: Serine hydroxymethyltransferase (417 aa).

(6S)-5,6,7,8-tetrahydrofolate-binding positions include Leu121 and 125–127 (GHL). Residue Lys229 is modified to N6-(pyridoxal phosphate)lysine. Position 355–357 (355–357 (SPF)) interacts with (6S)-5,6,7,8-tetrahydrofolate.

It belongs to the SHMT family. In terms of assembly, homodimer. The cofactor is pyridoxal 5'-phosphate.

The protein localises to the cytoplasm. It carries out the reaction (6R)-5,10-methylene-5,6,7,8-tetrahydrofolate + glycine + H2O = (6S)-5,6,7,8-tetrahydrofolate + L-serine. Its pathway is one-carbon metabolism; tetrahydrofolate interconversion. The protein operates within amino-acid biosynthesis; glycine biosynthesis; glycine from L-serine: step 1/1. Functionally, catalyzes the reversible interconversion of serine and glycine with tetrahydrofolate (THF) serving as the one-carbon carrier. This reaction serves as the major source of one-carbon groups required for the biosynthesis of purines, thymidylate, methionine, and other important biomolecules. Also exhibits THF-independent aldolase activity toward beta-hydroxyamino acids, producing glycine and aldehydes, via a retro-aldol mechanism. The protein is Serine hydroxymethyltransferase of Serratia proteamaculans (strain 568).